We begin with the raw amino-acid sequence, 579 residues long: CTP synthase (579 aa).

The 249-residue stretch at 310-558 (YVELHDAYLS…VAAAIGCLDQ (249 aa)) folds into the Glutamine amidotransferase type-1 domain. Catalysis depends on for GATase activity residues Cys-402, His-531, and Glu-533.

It belongs to the CTP synthase family.

The catalysed reaction is UTP + L-glutamine + ATP + H2O = CTP + L-glutamate + ADP + phosphate + 2 H(+). It participates in pyrimidine metabolism; CTP biosynthesis via de novo pathway; CTP from UDP: step 2/2. Its function is as follows. Catalyzes the ATP-dependent amination of UTP to CTP with either L-glutamine or ammonia as the source of nitrogen. This is CTP synthase (pyr-7) from Neurospora crassa (strain ATCC 24698 / 74-OR23-1A / CBS 708.71 / DSM 1257 / FGSC 987).